Reading from the N-terminus, the 601-residue chain is UvrABC system protein C (601 aa).

The GIY-YIG domain maps to 15 to 94 (LQPGVYLFKN…IKSYKPRYNI (80 aa)). Positions 202–237 (QEIVREKEKEMAMAARSLEFEKAARLRDQIQSLRQL) constitute a UVR domain.

It belongs to the UvrC family. In terms of assembly, interacts with UvrB in an incision complex.

It localises to the cytoplasm. The UvrABC repair system catalyzes the recognition and processing of DNA lesions. UvrC both incises the 5' and 3' sides of the lesion. The N-terminal half is responsible for the 3' incision and the C-terminal half is responsible for the 5' incision. The protein is UvrABC system protein C of Syntrophomonas wolfei subsp. wolfei (strain DSM 2245B / Goettingen).